A 171-amino-acid chain; its full sequence is ATP synthase subunit b (171 aa).

A helical transmembrane segment spans residues 32–52 (FFAVLLIFLIVLGVIAKWVVP).

Belongs to the ATPase B chain family. In terms of assembly, F-type ATPases have 2 components, F(1) - the catalytic core - and F(0) - the membrane proton channel. F(1) has five subunits: alpha(3), beta(3), gamma(1), delta(1), epsilon(1). F(0) has three main subunits: a(1), b(2) and c(10-14). The alpha and beta chains form an alternating ring which encloses part of the gamma chain. F(1) is attached to F(0) by a central stalk formed by the gamma and epsilon chains, while a peripheral stalk is formed by the delta and b chains.

It is found in the cell membrane. In terms of biological role, f(1)F(0) ATP synthase produces ATP from ADP in the presence of a proton or sodium gradient. F-type ATPases consist of two structural domains, F(1) containing the extramembraneous catalytic core and F(0) containing the membrane proton channel, linked together by a central stalk and a peripheral stalk. During catalysis, ATP synthesis in the catalytic domain of F(1) is coupled via a rotary mechanism of the central stalk subunits to proton translocation. Its function is as follows. Component of the F(0) channel, it forms part of the peripheral stalk, linking F(1) to F(0). This chain is ATP synthase subunit b, found in Mycolicibacterium gilvum (strain PYR-GCK) (Mycobacterium gilvum (strain PYR-GCK)).